We begin with the raw amino-acid sequence, 308 residues long: MAEENLELSLLCTESNVDDEGMIVDETPIEISIPQMGFSQSESEEIIMEMVEKEKQHLPSDDYIKRLRSGDLDLNVGRRDALNWIWKACEVHQFGPLCFCLAMNYLDRFLSVHDLPSGKGWILQLLAVACLSLAAKIEETEVPMLIDLQVGDPQFVFEAKSVQRMELLVLNKLKWRLRAITPCSYIRYFLRKMSKCDQEPSNTLISRSLQVIASTTKGIDFLEFRPSEVAAAVALSVSGELQRVHFDNSSFSPLFSLLQKERVKKIGEMIESDGSDLCSQTPNGVLEVSACCFSFKTHDSSSSYTHLS.

This sequence belongs to the cyclin family. Cyclin D subfamily. In terms of assembly, interacts with CDKA-1, CDKB2-1, KRP4/ICK7, KRP5/ICK3, KRP6/ICK4 and KRP7/ICK5. In terms of tissue distribution, expressed in shoot apical meristem, leaf primordia vascular tissues and tapetum of anthers.

Its function is as follows. May activate cell cycle in the root apical meristem (RAM) and promote embryonic root (radicle) protrusion. This chain is Cyclin-D4-1 (CYCD4-1), found in Arabidopsis thaliana (Mouse-ear cress).